A 357-amino-acid polypeptide reads, in one-letter code: UDP-N-acetylglucosamine--N-acetylmuramyl-(pentapeptide) pyrophosphoryl-undecaprenol N-acetylglucosamine transferase (357 aa).

Residues 11-13 (TGG), Asn120, Arg161, Ser188, and Gln281 each bind UDP-N-acetyl-alpha-D-glucosamine.

This sequence belongs to the glycosyltransferase 28 family. MurG subfamily.

The protein resides in the cell inner membrane. The catalysed reaction is di-trans,octa-cis-undecaprenyl diphospho-N-acetyl-alpha-D-muramoyl-L-alanyl-D-glutamyl-meso-2,6-diaminopimeloyl-D-alanyl-D-alanine + UDP-N-acetyl-alpha-D-glucosamine = di-trans,octa-cis-undecaprenyl diphospho-[N-acetyl-alpha-D-glucosaminyl-(1-&gt;4)]-N-acetyl-alpha-D-muramoyl-L-alanyl-D-glutamyl-meso-2,6-diaminopimeloyl-D-alanyl-D-alanine + UDP + H(+). Its pathway is cell wall biogenesis; peptidoglycan biosynthesis. Cell wall formation. Catalyzes the transfer of a GlcNAc subunit on undecaprenyl-pyrophosphoryl-MurNAc-pentapeptide (lipid intermediate I) to form undecaprenyl-pyrophosphoryl-MurNAc-(pentapeptide)GlcNAc (lipid intermediate II). This chain is UDP-N-acetylglucosamine--N-acetylmuramyl-(pentapeptide) pyrophosphoryl-undecaprenol N-acetylglucosamine transferase, found in Prochlorococcus marinus (strain SARG / CCMP1375 / SS120).